The primary structure comprises 504 residues: Cytochrome P450 4A24 (504 aa).

Transmembrane regions (helical) follow at residues 6–26 (LASA…LLLL) and 112–132 (VVYR…NGQT). C451 is a binding site for heme.

It belongs to the cytochrome P450 family. It depends on heme as a cofactor.

It is found in the endoplasmic reticulum membrane. The catalysed reaction is an omega-methyl-long-chain fatty acid + reduced [NADPH--hemoprotein reductase] + O2 = an omega-hydroxy-long-chain fatty acid + oxidized [NADPH--hemoprotein reductase] + H2O + H(+). Its function is as follows. Catalyzes the omega- and (omega-1)-hydroxylation of various fatty acids such as laurate and palmitate. Has no activity toward taurochenodeoxycholic acid. The sequence is that of Cytochrome P450 4A24 (CYP4A24) from Sus scrofa (Pig).